A 299-amino-acid polypeptide reads, in one-letter code: S-fimbrial protein subunit SfaH (299 aa).

This sequence belongs to the fimbrial protein family.

Its subcellular location is the fimbrium. Fimbriae (also called pili), polar filaments radiating from the surface of the bacterium to a length of 0.5-1.5 micrometers and numbering 100-300 per cell, enable bacteria to colonize the epithelium of specific host organs. Functionally, a minor fimbrial subunit. This protein is necessary for full expression of S-specific binding. S-fimbrial adhesins enable pathogenic E.coli causing urinary-tract infections or newborn meningitis to attach to glycoproteins terminating with alpha-sialic acid-(2-3)-beta-Gal. The sequence is that of S-fimbrial protein subunit SfaH (sfaH) from Escherichia coli O6:K15:H31 (strain 536 / UPEC).